A 405-amino-acid polypeptide reads, in one-letter code: Phosphoglycerate kinase (405 aa).

Residues 21 to 23, R36, 59 to 62, R119, and R161 contribute to the substrate site; these read DFN and HLGR. ATP-binding positions include K212, G301, E332, and 361–364; that span reads GGDS.

Belongs to the phosphoglycerate kinase family. As to quaternary structure, monomer.

The protein localises to the cytoplasm. It carries out the reaction (2R)-3-phosphoglycerate + ATP = (2R)-3-phospho-glyceroyl phosphate + ADP. It functions in the pathway carbohydrate degradation; glycolysis; pyruvate from D-glyceraldehyde 3-phosphate: step 2/5. The polypeptide is Phosphoglycerate kinase (Leuconostoc mesenteroides subsp. mesenteroides (strain ATCC 8293 / DSM 20343 / BCRC 11652 / CCM 1803 / JCM 6124 / NCDO 523 / NBRC 100496 / NCIMB 8023 / NCTC 12954 / NRRL B-1118 / 37Y)).